The chain runs to 470 residues: Protein naked cuticle homolog 1 (470 aa).

Disordered regions lie at residues 1 to 21 (MGKL…PEGD) and 90 to 114 (PPEK…PCPG). A lipid anchor (N-myristoyl glycine) is attached at G2. Over residues 92–109 (EKTDGLGSGDEKKMERVS) the composition is skewed to basic and acidic residues. An interaction with DVL1, DVL2 and DVL3 region spans residues 125–190 (QCDVSMEEDS…LRVKLTVAPD (66 aa)). Positions 131-166 (EEDSRQEWTFTLYDFDNNGKVTREDITSLLHTIYEV) constitute an EF-hand domain. Residues D144, D146, N148, K150, and D155 each contribute to the Ca(2+) site. A compositionally biased stretch (polar residues) spans 192–205 (SQSKRSVLVNQADL). 4 disordered regions span residues 192–228 (SQSK…KKQR), 271–314 (QFGP…QGVD), 337–357 (GTQD…KSVG), and 446–470 (GQPV…FYQT). The span at 210–227 (PRAETKPTEDLRSWEKKQ) shows a compositional bias: basic and acidic residues. The span at 271–281 (QFGPGSPSVAQ) shows a compositional bias: polar residues. The segment covering 452–470 (HEHHHHHEHHHHYHHFYQT) has biased composition (basic residues).

The protein belongs to the NKD family. Interacts with DVL1, DVL2, DVL3 and PPP2R3A. In terms of tissue distribution, expressed in colon, heart, kidney, leukocyte, liver, lung, ovary, pancreas, placenta, prostate, skeletal muscle, small intestine and spleen.

The protein localises to the cell membrane. The protein resides in the cytoplasm. Functionally, cell autonomous antagonist of the canonical Wnt signaling pathway. May activate a second Wnt signaling pathway that controls planar cell polarity. In Homo sapiens (Human), this protein is Protein naked cuticle homolog 1 (NKD1).